The chain runs to 88 residues: MITMSRRAESRQIEANEVLDIRGEVCPFTFIETKLKLEEMKSGEILRVIIDHEPAVRDVPRSVEQEGHEVLSVEKVGEKEWSILIKKK.

Cys26 serves as the catalytic Cysteine persulfide intermediate.

This sequence belongs to the sulfur carrier protein TusA family.

The polypeptide is Putative sulfur carrier protein AF_0554 (Archaeoglobus fulgidus (strain ATCC 49558 / DSM 4304 / JCM 9628 / NBRC 100126 / VC-16)).